Reading from the N-terminus, the 287-residue chain is Protease HtpX (287 aa).

Helical transmembrane passes span 4–24 and 33–53; these read IFLLIVTNLAVLLVASIVMSI and GGLLVFAAIFGFGGAFISLAI. Residue His139 coordinates Zn(2+). Residue Glu140 is part of the active site. His143 is a binding site for Zn(2+). The next 2 helical transmembrane spans lie at 154–174 and 195–215; these read LIQGVVNTFVIFAARVVAGII and AVVFVLDMLFGILASIIVAYF. Position 220 (Glu220) interacts with Zn(2+).

It belongs to the peptidase M48B family. Requires Zn(2+) as cofactor.

The protein resides in the cell inner membrane. The polypeptide is Protease HtpX (Shewanella oneidensis (strain ATCC 700550 / JCM 31522 / CIP 106686 / LMG 19005 / NCIMB 14063 / MR-1)).